An 89-amino-acid chain; its full sequence is Small ribosomal subunit protein uS15 (89 aa).

The protein belongs to the universal ribosomal protein uS15 family. As to quaternary structure, part of the 30S ribosomal subunit. Forms a bridge to the 50S subunit in the 70S ribosome, contacting the 23S rRNA.

Its function is as follows. One of the primary rRNA binding proteins, it binds directly to 16S rRNA where it helps nucleate assembly of the platform of the 30S subunit by binding and bridging several RNA helices of the 16S rRNA. Forms an intersubunit bridge (bridge B4) with the 23S rRNA of the 50S subunit in the ribosome. This Dictyoglomus thermophilum (strain ATCC 35947 / DSM 3960 / H-6-12) protein is Small ribosomal subunit protein uS15.